The sequence spans 829 residues: Venom phosphodiesterase CdcPDE (829 aa).

SMB domains lie at 8–51 and 52–96; these read PQVS…VLPT and QSWS…GETS. 16 disulfides stabilise this stretch: C12/C16, C12/C29, C16/C47, C27/C29, C27/C40, C33/C39, C40/C47, C56/C61, C56/C73, C61/C91, C71/C73, C71/C84, C77/C83, C84/C91, C102/C148, and C110/C322. A glycan (N-linked (GlcNAc...) asparagine) is linked at N17. The Cell attachment site motif lies at 36–38; the sequence is RQA. Residues D125 and T163 each contribute to the a divalent metal cation site. T163 acts as the AMP-threonine intermediate in catalysis. N-linked (GlcNAc...) asparagine glycosylation is found at N194 and N237. K249 serves as a coordination point for AMP. A divalent metal cation-binding residues include D283, H287, D330, and H331. H287 contacts AMP. 6 disulfide bridges follow: C338-C435, C386-C771, C519-C577, C532-C632, C534-C617, and C740-C750. N383 carries an N-linked (GlcNAc...) asparagine glycan. H440 serves as a coordination point for a divalent metal cation. 2 N-linked (GlcNAc...) asparagine glycosylation sites follow: N572 and N652.

It belongs to the nucleotide pyrophosphatase/phosphodiesterase family. Monomer. A divalent metal cation is required as a cofactor. Post-translationally, N-glycosylated. Glycosylation counts for an increased mass of ~9%. In terms of processing, contains 16 disulfide bonds. As to expression, expressed by venom gland.

The protein resides in the secreted. The enzyme catalyses ADP + H2O = AMP + phosphate + H(+). Functionally, hydrolyzes ADP with high activity. Shows weak or no activity on 5'-AMP, 5'-GMP, 3'-AMP, ATP, cAMP, and cGMP. Is devoid of monophosphatase and proteinase activities. Inhibits ADP-induced platelet aggregation and is cytotoxic to human keratinocytes. Kinetic parameters indicated a higher affinity for the substrate bis(p-nitrophenyl) phosphate compared to others snake venom PDEs. Is recognized by the crotalid antivenom produced by the Instituto Butantan. This is Venom phosphodiesterase CdcPDE from Crotalus durissus collilineatus (Brazilian rattlesnake).